A 489-amino-acid chain; its full sequence is Cytochrome P450 2C70 (489 aa).

The first 27 residues, 1–27 (MALFIFLGIWLSCLVFLFLWNQHHVRR), serve as a signal peptide directing secretion. Cys434 is a heme binding site.

It belongs to the cytochrome P450 family. Heme serves as cofactor.

It is found in the endoplasmic reticulum membrane. The protein localises to the microsome membrane. It carries out the reaction chenodeoxycholate + reduced [NADPH--hemoprotein reductase] + O2 = alpha-muricholate + oxidized [NADPH--hemoprotein reductase] + H2O + H(+). The catalysed reaction is ursodeoxycholate + reduced [NADPH--hemoprotein reductase] + O2 = beta-muricholate + oxidized [NADPH--hemoprotein reductase] + H2O + H(+). Its function is as follows. A cytochrome P450 monooxygenase involved in muricholic acid (MCA) synthesis. Hydroxylates at the 6-beta position two major bile acids, chenodeoxycholic acid (CDCA) and ursodeoxycholic acid (UDCA) to form alpha-MCA and beta-MCA, respectively. May regulate NR1H4/farnesoid X receptor signaling, as taurine-conjugated MCAs are antagonists of NR1H4. Mechanistically, uses molecular oxygen inserting one oxygen atom into a substrate, and reducing the second into a water molecule, with two electrons provided by NADPH via cytochrome P450 reductase (CPR; NADPH-ferrihemoprotein reductase). The sequence is that of Cytochrome P450 2C70 from Rattus norvegicus (Rat).